Consider the following 89-residue polypeptide: Small ribosomal subunit protein uS14 (89 aa).

This sequence belongs to the universal ribosomal protein uS14 family. In terms of assembly, part of the 30S ribosomal subunit. Contacts proteins S3 and S10.

Its function is as follows. Binds 16S rRNA, required for the assembly of 30S particles and may also be responsible for determining the conformation of the 16S rRNA at the A site. The sequence is that of Small ribosomal subunit protein uS14 from Leuconostoc mesenteroides subsp. mesenteroides (strain ATCC 8293 / DSM 20343 / BCRC 11652 / CCM 1803 / JCM 6124 / NCDO 523 / NBRC 100496 / NCIMB 8023 / NCTC 12954 / NRRL B-1118 / 37Y).